The primary structure comprises 422 residues: 5-hydroxytryptamine receptor 1A (422 aa).

The interval 1–23 (MDVLSPGQGNNTTSPPAPFETGG) is disordered. The Extracellular segment spans residues 1 to 38 (MDVLSPGQGNNTTSPPAPFETGGNTTGISDVTVSYQVI). N-linked (GlcNAc...) asparagine glycans are attached at residues asparagine 10, asparagine 11, and asparagine 24. A helical transmembrane segment spans residues 39–59 (TSLLLGTLIFCAVLGNACVVA). Residues 60-73 (AIALERSLQNVANY) are Cytoplasmic-facing. Residues 74 to 98 (LIGSLAVTDLMVSVLVLPMAALYQV) form a helical membrane-spanning segment. Over 99–107 (LNKWTLGQV) the chain is Extracellular. Residues 108-132 (TCDLFIALDVLCCTSSILHLCAIAL) traverse the membrane as a helical segment. The cysteines at positions 109 and 187 are disulfide-linked. The serotonin site is built by aspartate 116 and cysteine 120. The DRY motif; important for ligand-induced conformation changes signature appears at 133 to 135 (DRY). Residues 133–152 (DRYWAITDPIDYVNKRTPRR) lie on the Cytoplasmic side of the membrane. Residues 153-174 (AAALISLTWLIGFLISIPPMLG) traverse the membrane as a helical segment. Over 175-193 (WRTPEDRSDPDACTISKDH) the chain is Extracellular. A helical membrane pass occupies residues 194–216 (GYTIYSTFGAFYIPLLLMLVLYG). At 217 to 346 (RIFRAARFRI…LARERKTVKT (130 aa)) the chain is on the cytoplasmic side. Residues 235-262 (KTGADTRHGASPAPQPKKSVNGESGSRN) are disordered. 4 residues coordinate 1D-myo-inositol 4-phosphate: threonine 314, lysine 345, threonine 346, and glycine 352. The helical transmembrane segment at 347 to 370 (LGIIMGTFILCWLPFFIVALVLPF) threads the bilayer. At 371–378 (CESSCHMP) the chain is on the extracellular side. A helical membrane pass occupies residues 379 to 403 (TLLGAIINWLGYSNSLLNPVIYAYF). The NPxxY motif; important for ligand-induced conformation changes and signaling signature appears at 396 to 400 (NPVIY). Residues phenylalanine 403, asparagine 404, and lysine 405 each contribute to the 1D-myo-inositol 4-phosphate site. Over 404 to 422 (NKDFQNAFKKIIKCKFCRQ) the chain is Cytoplasmic.

Belongs to the G-protein coupled receptor 1 family. 5-hydroxytryptamine receptor subfamily. HTR1A sub-subfamily. Heterodimer; heterodimerizes with GPER1. Interacts with YIF1B. Interacts with GPR39 and GALR1. In terms of tissue distribution, detected in lymph nodes, thymus and spleen. Detected in activated T-cells, but not in resting T-cells.

Its subcellular location is the cell membrane. It localises to the cell projection. The protein resides in the dendrite. With respect to regulation, G-protein coupled receptor activity is regulated by lipids: phosphatidylinositol 4-phosphate increases HTR1A-mediated activity. Binding to aripiprazol drug is regulated by cholesterol, which shapes the ligand-binding pocket, determining the specificity for aripiprazol. Activated by IHCH-7179 small molecule: IHCH-7179 acts both as an agonist activator for HTR1A and as an antagonist inhibitor for HTR2A. Activated by SEP-363856 small molecule: IHCH-7179 acts both as an agonist activator for HTR1A and TAAR1. In terms of biological role, G-protein coupled receptor for 5-hydroxytryptamine (serotonin). Also functions as a receptor for various drugs and psychoactive substances. Ligand binding causes a conformation change that triggers signaling via guanine nucleotide-binding proteins (G proteins) and modulates the activity of downstream effectors, such as adenylate cyclase. HTR1A is coupled to G(i)/G(o) G alpha proteins and mediates inhibitory neurotransmission: signaling inhibits adenylate cyclase activity and activates a phosphatidylinositol-calcium second messenger system that regulates the release of Ca(2+) ions from intracellular stores. Beta-arrestin family members regulate signaling by mediating both receptor desensitization and resensitization processes. Plays a role in the regulation of 5-hydroxytryptamine release and in the regulation of dopamine and 5-hydroxytryptamine metabolism. Plays a role in the regulation of dopamine and 5-hydroxytryptamine levels in the brain, and thereby affects neural activity, mood and behavior. Plays a role in the response to anxiogenic stimuli. In Homo sapiens (Human), this protein is 5-hydroxytryptamine receptor 1A.